Reading from the N-terminus, the 620-residue chain is MAEARTSLSAHCRGPLATGLHPDLDLPGRSLATPAPSCYLLGSEPSSGLGLQPETHLPEGSLKRCCVLGLPPTSPASSSPCASSDVTSIIRSSQTSLVTCVNGLRSPPLTGDLGGPSKRARPGPASTDSHEGSLQLEACRKASFLKQEPADEFSELFGPHQQGLPPPYPLSQLPPGPSLGGLGLGLAGRVVAGRQACRWVDCCAAYEQQEELVRHIEKSHIDQRKGEDFTCFWAGCVRRYKPFNARYKLLIHMRVHSGEKPNKCMFEGCSKAFSRLENLKIHLRSHTGEKPYLCQHPGCQKAFSNSSDRAKHQRTHLDTKPYACQIPGCSKRYTDPSSLRKHVKAHSAKEQQVRKKLHAGPDTEADVLTECLVLQQLHTSTQLAASDGKGGCGLGQELLPGVYPGSITPHNGLASGLLPPAHDVPSRHHPLDATTSSHHHLSPLPMAESTRDGLGPGLLSPIVSPLKGLGPPPLPPSSQSHSPGGQPFPTLPSKPSYPPFQSPPPPPLPSPQGYQGSFHSIQSCFPYGDCYRMAEPAAGGDGLVGETHGFNPLRPNGYHSLSTPLPATGYEALAEASCPTALPQQPSEDVVSSGPEDCGFFPNGAFDHCLGHIPSIYTDT.

The interval 108–132 is disordered; sequence PLTGDLGGPSKRARPGPASTDSHEG. A C2H2-type 1 zinc finger spans residues 195–220; it reads QACRWVDCCAAYEQQEELVRHIEKSH. A C2H2-type 2; atypical zinc finger spans residues 229-256; that stretch reads FTCFWAGCVRRYKPFNARYKLLIHMRVH. 3 C2H2-type zinc fingers span residues 262–286, 292–316, and 322–346; these read NKCMFEGCSKAFSRLENLKIHLRSH, YLCQHPGCQKAFSNSSDRAKHQRTH, and YACQIPGCSKRYTDPSSLRKHVKAH. The short motif at 340-356 is the Bipartite nuclear localization signal element; the sequence is RKHVKAHSAKEQQVRKK. A disordered region spans residues 414-515; that stretch reads ASGLLPPAHD…PPLPSPQGYQ (102 aa). The segment covering 477–488 has biased composition (low complexity); it reads SSQSHSPGGQPF. The span at 489 to 510 shows a compositional bias: pro residues; that stretch reads PTLPSKPSYPPFQSPPPPPLPS.

It belongs to the GLI C2H2-type zinc-finger protein family. As to quaternary structure, interacts with KLF4. Interacts with POU5F1 and/or POU5F1B. Interacts with SOX2.

It localises to the nucleus. In terms of biological role, acts both as a repressor and an activator of transcription. Binds to the consensus sequence 5'-GACCACCCAC-3'. By controlling the expression of genes involved in cell differentiation inhibits the lineage commitment of multipotent cells. Prevents, for instance, the differentiation of multipotent mesenchymal cells into adipocyte and osteoblast. This Homo sapiens (Human) protein is Zinc finger protein GLIS1.